Reading from the N-terminus, the 262-residue chain is Abhydrolase domain-containing protein AFT2-1 (262 aa).

Residues 260–262 (SKL) carry the Peroxisomal targeting signal type 1 motif.

It belongs to the AB hydrolase superfamily. AKT2 hydrolase family.

It localises to the peroxisome. The protein operates within mycotoxin biosynthesis. Abhydrolase domain-containing protein; part of the gene clusters that mediate the biosynthesis of the host-selective toxins (HSTs) AF-toxins responsible for Alternaria black spot of strawberry disease by the strawberry pathotype. AF-toxin I and III are valine derivatives of 2,3-dyhydroxy-isovaleric acid and 2-hydroxy-isovaleric acid respectively, while AF II is an isoleucine derivative of 2-hydroxy-valeric acid. These derivatives are bound to a 9,10-epoxy-8-hydroxy-9-methyl-decatrienoic acid (EDA) moiety. On cellular level, AF-toxins affect plasma membrane of susceptible cells and cause a sudden increase in loss of K(+) after a few minutes of toxin treatment. The aldo-keto reductase AFTS1 catalyzes the conversion of 2-keto-isovaleric acid (2-KIV) to 2-hydroxy-isovaleric acid (2-HIV) by reduction of its ketone to an alcohol. The acyl-CoA ligase AFT1, the hydrolase AFT2 and the enoyl-CoA hydratases AFT3 and AFT6, but also the polyketide synthase AFT9, the acyl-CoA dehydrogenase AFT10, the cytochrome P450 monooxygenase AFT11 and the oxidoreductase AFT12 are all involved in the biosynthesis of the AK-, AF- and ACT-toxin common EDA structural moiety. The exact function of each enzyme, and of additional enzymes identified within the AF-toxin clusters have still to be determined. In Alternaria alternata (Alternaria rot fungus), this protein is Abhydrolase domain-containing protein AFT2-1.